The primary structure comprises 132 residues: UPF0102 protein LI0223 (132 aa).

The protein belongs to the UPF0102 family.

This chain is UPF0102 protein LI0223, found in Lawsonia intracellularis (strain PHE/MN1-00).